We begin with the raw amino-acid sequence, 292 residues long: Putative gonadotropin-releasing hormone II receptor (292 aa).

Topologically, residues 1–28 are extracellular; it reads MSAGNGTPWDATWNITVQWLAVDIACRT. Cys-26 and Cys-101 form a disulfide bridge. A helical transmembrane segment spans residues 29-49; the sequence is LMFLKLMATYSAAFLPVVIGL. Topologically, residues 50–67 are cytoplasmic; the sequence is DRQAAVLNPLGSRSGVRK. The chain crosses the membrane as a helical span at residues 68–88; it reads LLGAAWGLSFLLAFPQLFLFH. Topologically, residues 89–115 are extracellular; the sequence is TVHCAGPVPFTQCVTKGSFKAQWQETT. Residues 116–136 form a helical membrane-spanning segment; sequence YNLFTFCCLFLLPLTAMAICY. Over 137-177 the chain is Cytoplasmic; sequence SRIVLSVSRPQTRKGSHAPAGEFALPRSFDNCPRVRLRALR. A helical membrane pass occupies residues 178 to 198; it reads LALLILLTFILCWTPYYLLGM. The Extracellular segment spans residues 199-216; it reads WYWFSPTMLTEVPPSLSH. Residues 217–237 form a helical membrane-spanning segment; that stretch reads ILFLLGLLNAPLDPLLYGAFT. The Cytoplasmic segment spans residues 238–292; the sequence is LGCRRGHQELSIDSSKEGSGRMLQEEIHAFRQLEVQKTVTSRRAGETKGISITSI.

The protein belongs to the G-protein coupled receptor 1 family. Phosphorylated on the C-terminal cytoplasmic tail. In terms of tissue distribution, expressed in many tissues.

The protein localises to the cell membrane. Its function is as follows. Putative receptor for gonadotropin releasing hormone II (GnRH II) which is most probably non-functional. The protein is Putative gonadotropin-releasing hormone II receptor (GNRHR2) of Homo sapiens (Human).